A 497-amino-acid polypeptide reads, in one-letter code: Carboxylesterase (497 aa).

Ser-185 acts as the Acyl-ester intermediate in catalysis. Active-site charge relay system residues include Glu-319 and His-415.

Belongs to the type-B carboxylesterase/lipase family.

It is found in the secreted. It carries out the reaction a carboxylic ester + H2O = an alcohol + a carboxylate + H(+). The sequence is that of Carboxylesterase from Thermobifida fusca (Thermomonospora fusca).